The primary structure comprises 299 residues: Dye-decolorizing peroxidase YfeX (299 aa).

Histidine 215 lines the heme pocket.

Belongs to the DyP-type peroxidase family. It depends on heme b as a cofactor.

The protein resides in the cytoplasm. Has both general peroxidase activity and dye-decolorizing activity. Can catalyze the oxidation of 2,2'-azino-bis(3-ethylbenzothiazoline-6-sulphonic acid) (ABTS), and the phenolic compounds guaiacol and catechol. Also decolorizes the anthraquinone dye reactive blue 19 (RB19). This is Dye-decolorizing peroxidase YfeX from Escherichia coli O157:H7.